The primary structure comprises 638 residues: Influenza virus NS1A-binding protein homolog (638 aa).

The BTB domain occupies 32–99 (CDVKLQVCGH…AYTSQLKAET (68 aa)). Residues 134 to 233 (GISCRNFVNT…YYSADHKLLD (100 aa)) enclose the BACK domain. A disordered region spans residues 251-273 (IQKKSPRENNHKNLISSSSGSLS). Kelch repeat units lie at residues 365-411 (KLIA…VLMD), 412-459 (HLYV…ALNG), 461-508 (LYVV…ELGN), 509-555 (KIYI…VYDG), 557-602 (LLVV…AVGN), and 604-638 (IYAA…LCES).

It is found in the cytoplasm. The protein resides in the cytoskeleton. Its subcellular location is the nucleus. Functionally, plays a role in cell division and in the dynamic organization of the actin skeleton as a stabilizer of actin filaments by association with F-actin through Kelch repeats. This is Influenza virus NS1A-binding protein homolog (ivns1abp) from Xenopus laevis (African clawed frog).